Consider the following 128-residue polypeptide: SH2 domain-containing protein 1A (128 aa).

Positions 6-102 constitute an SH2 domain; that stretch reads VYHGKISRET…GIVIPLQYPV (97 aa). Residues 67-92 form an interaction with FYN SH3 domain region; it reads ETAPGVHKRYFRKIKNLISAFQKPDQ. Lysine 89 is modified (N6-acetyllysine). Residues 106 to 128 form a disordered region; sequence SSARSTQGTTGIREDPDVCLKAP. Residues 117–128 show a composition bias toward basic and acidic residues; the sequence is IREDPDVCLKAP.

Interacts with CD84, CD244, LY9, SLAMF1 and FYN. Interacts with NTRK1, NTRK2 and NTRK3.

It is found in the cytoplasm. Its function is as follows. Cytoplasmic adapter regulating receptors of the signaling lymphocytic activation molecule (SLAM) family such as SLAMF1, CD244, LY9, CD84, SLAMF6 and SLAMF7. In SLAM signaling seems to cooperate with SH2D1B/EAT-2. Initially it has been proposed that association with SLAMF1 prevents SLAMF1 binding to inhibitory effectors including INPP5D/SHIP1 and PTPN11/SHP-2. However, by simultaneous interactions, recruits FYN which subsequently phosphorylates and activates SLAMF1. Positively regulates CD244/2B4- and CD84-mediated natural killer (NK) cell functions. Can also promote CD48-, SLAMF6 -, LY9-, and SLAMF7-mediated NK cell activation. In the context of NK cell-mediated cytotoxicity enhances conjugate formation with target cells. May also regulate the activity of the neurotrophin receptors NTRK1, NTRK2 and NTRK3. The protein is SH2 domain-containing protein 1A (SH2D1A) of Macaca mulatta (Rhesus macaque).